We begin with the raw amino-acid sequence, 60 residues long: Small ribosomal subunit protein bS21 (60 aa).

Positions 39–60 are disordered; it reads ETPQEKRKRKAVARRRQRTRRR. The segment covering 44–60 has biased composition (basic residues); the sequence is KRKRKAVARRRQRTRRR.

The protein belongs to the bacterial ribosomal protein bS21 family.

The sequence is that of Small ribosomal subunit protein bS21 from Microcystis aeruginosa (strain NIES-843 / IAM M-2473).